The sequence spans 1030 residues: Translation initiation factor IF-2 (1030 aa).

2 stretches are compositionally biased toward low complexity: residues 56 to 69 (APSEPVAAASAADS) and 111 to 132 (PNIVAPPRRPAAANEPAKAPIK). 2 disordered regions span residues 56–361 (APSE…KRRQ) and 394–434 (SKPK…REQK). The segment covering 134–144 (ARPEKSAEKPE) has biased composition (basic and acidic residues). The span at 154-164 (AASAEPAKSPS) shows a compositional bias: low complexity. Residues 188–206 (LLRKPEIVRRSEAKPERTS) show a composition bias toward basic and acidic residues. A compositionally biased stretch (low complexity) spans 259 to 273 (VAASASGVPAAASRV). The 174-residue stretch at 522 to 695 (TRPPVVTVMG…LLVTEVEELV (174 aa)) folds into the tr-type G domain. The interval 531-538 (GHVDHGKT) is G1. 531-538 (GHVDHGKT) contributes to the GTP binding site. The G2 stretch occupies residues 556–560 (GITQH). The interval 581–584 (DTPG) is G3. GTP-binding positions include 581-585 (DTPGH) and 635-638 (NKCD). The tract at residues 635-638 (NKCD) is G4. The G5 stretch occupies residues 671–673 (SAI).

It belongs to the TRAFAC class translation factor GTPase superfamily. Classic translation factor GTPase family. IF-2 subfamily.

Its subcellular location is the cytoplasm. Its function is as follows. One of the essential components for the initiation of protein synthesis. Protects formylmethionyl-tRNA from spontaneous hydrolysis and promotes its binding to the 30S ribosomal subunits. Also involved in the hydrolysis of GTP during the formation of the 70S ribosomal complex. The protein is Translation initiation factor IF-2 of Synechococcus elongatus (strain ATCC 33912 / PCC 7942 / FACHB-805) (Anacystis nidulans R2).